A 544-amino-acid chain; its full sequence is CRISPR-associated endodeoxyribonuclease Cas12f2 (544 aa).

Residues 1-195 form a recognition domain (REC) region; sequence MNMSKTTISV…KPNERETRYV (195 aa). The wedge domain (WED) stretch occupies residues 196–326; it reads HISKLESPSK…YLQYTYEAEV (131 aa). The interval 327–334 is linker; the sequence is EANKEYAG. The tract at residues 335-485 is ruvC-I; the sequence is CLGVDIGCSK…VYVKPDYTSQ (151 aa). Catalysis depends on residues D339 and E430. Residues 486–520 form a target nucleic acid-binding (TNB) region; that stretch reads TCSSCGADKEKTERPSQAIFRCLNPTCRYYQRDIN. Zn(2+) is bound by residues C487, C490, C507, and C512. The tract at residues 521 to 541 is ruvC-II; sequence ADFNAAVNIAKKALNNTEVVT. Residue D522 is part of the active site.

This sequence belongs to the CRISPR-associated endonuclease Cas12f family. As to quaternary structure, an asymmetric homodimer. Guide RNA is probably required for dimerization. It depends on Mg(2+) as a cofactor. Zn(2+) serves as cofactor.

CRISPR (clustered regularly interspaced short palindromic repeat), is an adaptive immune system that provides protection against mobile genetic elements (viruses, transposable elements and conjugative plasmids). CRISPR clusters contain sequences complementary to antecedent mobile elements and target invading nucleic acids. CRISPR clusters are transcribed and processed into CRISPR RNA (crRNA), which requires a trans-encoded small RNA (tracrRNA), but not this protein (in vitro). Recognizes a short motif in the CRISPR repeat sequences (the 5' PAM or protospacer adjacent motif, TTAT in this organism) to help distinguish self versus nonself, as targets within the CRISPR locus do not have PAMs. Upon expression in E.coli of this protein, a mini CRISPR array and the probable tracrRNA, has dsDNA endonuclease activity. DNA cleavage is centered around positions 21 base pairs 3' of PAM. The mini system does not protect E.coli against transformation by foreign plasmids. This chain is CRISPR-associated endodeoxyribonuclease Cas12f2, found in Micrarchaeota archaeon (strain CG1_02_47_40).